The primary structure comprises 354 residues: Ribosomal RNA large subunit methyltransferase M (354 aa).

S-adenosyl-L-methionine is bound by residues Ser183, 216–219, Asp235, Asp255, and Asp271; that span reads SPGG. The Proton acceptor role is filled by Lys300.

It belongs to the class I-like SAM-binding methyltransferase superfamily. RNA methyltransferase RlmE family. RlmM subfamily. As to quaternary structure, monomer.

Its subcellular location is the cytoplasm. The enzyme catalyses cytidine(2498) in 23S rRNA + S-adenosyl-L-methionine = 2'-O-methylcytidine(2498) in 23S rRNA + S-adenosyl-L-homocysteine + H(+). Its function is as follows. Catalyzes the 2'-O-methylation at nucleotide C2498 in 23S rRNA. In Pseudomonas entomophila (strain L48), this protein is Ribosomal RNA large subunit methyltransferase M.